The following is a 732-amino-acid chain: Conidiogenone synthase (732 aa).

The tract at residues Met1–Val311 is terpene cyclase. Asp97 is a Mg(2+) binding site. Substrate contacts are provided by residues Asp97, Arg169–Asp172, Asn213, Ser217–Glu221, and Arg307–Tyr308. The DDXXD 1 motif lies at Asp97 to Gln101. Positions Asn213–Glu221 match the NSE/DTE motif. The interval Asp312 to Lys732 is prenyltransferase. The disordered stretch occupies residues Lys348 to Asn370. Isopentenyl diphosphate-binding residues include Lys402, Arg405, and His434. 2 residues coordinate Mg(2+): Asp441 and Asp445. The DDXXD 2 signature appears at Asp441–Asp445. Position 450 (Arg450) interacts with dimethylallyl diphosphate. Arg451 provides a ligand contact to isopentenyl diphosphate. Lys529, Thr530, Gln565, Asn572, Lys582, and Lys592 together coordinate dimethylallyl diphosphate.

In the N-terminal section; belongs to the terpene synthase family. The protein in the C-terminal section; belongs to the FPP/GGPP synthase family. Hexamer. It depends on Mg(2+) as a cofactor.

The catalysed reaction is isopentenyl diphosphate + (2E,6E)-farnesyl diphosphate = (2E,6E,10E)-geranylgeranyl diphosphate + diphosphate. The protein operates within secondary metabolite biosynthesis; terpenoid biosynthesis. Functionally, bifunctional terpene synthase; part of the gene cluster that mediates the biosynthesis of conidiogenone, a diterpene known to induce the conidiation. The bifunctional terpene synthase PchDS converts isopentenyl diphosphate (IPP) and dimethylallyl diphosphate (DMAPP) into deoxyconidiogenol. The C-terminal prenyltransferase (PT) domain of PchDS catalyzes formation of GGPP, whereas the N-terminal terpene cyclase (TC) domain catalyzes the cyclization of GGPP into deoxyconidiogenol. The cytochrome P450 monooxygenase PchP450 then catalyzes two rounds of oxidation to furnish conidiogenone. The protein is Conidiogenone synthase of Penicillium rubens (strain ATCC 28089 / DSM 1075 / NRRL 1951 / Wisconsin 54-1255) (Penicillium chrysogenum).